Reading from the N-terminus, the 181-residue chain is Trafficking protein particle complex subunit 3 homolog (181 aa).

Cys70 carries the S-palmitoyl cysteine lipid modification.

The protein belongs to the TRAPP small subunits family. BET3 subfamily. As to quaternary structure, homodimer. Part of the multisubunit TRAPP (transport protein particle) complex.

It localises to the golgi apparatus. The protein localises to the cis-Golgi network. Its subcellular location is the endoplasmic reticulum. Functionally, may play a role in vesicular transport from endoplasmic reticulum to Golgi. Required for the systemic spread of the RNAi response. This is Trafficking protein particle complex subunit 3 homolog (trpp-3) from Caenorhabditis elegans.